The chain runs to 247 residues: DNA repair protein RecO (247 aa).

The protein belongs to the RecO family.

In terms of biological role, involved in DNA repair and RecF pathway recombination. This is DNA repair protein RecO from Methylocella silvestris (strain DSM 15510 / CIP 108128 / LMG 27833 / NCIMB 13906 / BL2).